The chain runs to 105 residues: Small ribosomal subunit protein uS10 (105 aa).

It belongs to the universal ribosomal protein uS10 family. In terms of assembly, part of the 30S ribosomal subunit.

Involved in the binding of tRNA to the ribosomes. The sequence is that of Small ribosomal subunit protein uS10 from Rickettsia peacockii (strain Rustic).